A 473-amino-acid chain; its full sequence is PEP-dependent dihydroxyacetone kinase, phosphoryl donor subunit DhaM (473 aa).

The 137-residue stretch at 1 to 137 folds into the PTS EIIA type-4 domain; sequence MVNLVIVSHS…LAAKQAQLGI (137 aa). The Tele-phosphohistidine intermediate role is filled by His9. An HPr domain is found at 155 to 242; the sequence is ARSVTVTIRN…SLAAEDFGEH (88 aa). His169 (pros-phosphohistidine intermediate) is an active-site residue. A PTS EI-like, N-terminal part region spans residues 266-472; it reads PLPLAQPARH…IDPAAQRVSC (207 aa). His432 acts as the Tele-phosphohistidine intermediate in catalysis.

This sequence belongs to the PEP-utilizing enzyme family. As to quaternary structure, homodimer. The dihydroxyacetone kinase complex is composed of a homodimer of DhaM, a homodimer of DhaK and the subunit DhaL.

It carries out the reaction dihydroxyacetone + phosphoenolpyruvate = dihydroxyacetone phosphate + pyruvate. Component of the dihydroxyacetone kinase complex, which is responsible for the phosphoenolpyruvate (PEP)-dependent phosphorylation of dihydroxyacetone. DhaM serves as the phosphoryl donor. Is phosphorylated by phosphoenolpyruvate in an EI- and HPr-dependent reaction, and a phosphorelay system on histidine residues finally leads to phosphoryl transfer to DhaL and dihydroxyacetone. The protein is PEP-dependent dihydroxyacetone kinase, phosphoryl donor subunit DhaM of Pantoea ananatis (strain LMG 20103).